Consider the following 83-residue polypeptide: Putative membrane protein insertion efficiency factor (83 aa).

The interval 63-83 (GGNDPVPDHFSLRRNKTDISD) is disordered. A compositionally biased stretch (basic and acidic residues) spans 68-83 (VPDHFSLRRNKTDISD).

Belongs to the UPF0161 family.

The protein localises to the cell membrane. In terms of biological role, could be involved in insertion of integral membrane proteins into the membrane. This chain is Putative membrane protein insertion efficiency factor, found in Streptococcus agalactiae serotype III (strain NEM316).